Reading from the N-terminus, the 312-residue chain is 4-hydroxy-3-methylbut-2-enyl diphosphate reductase (312 aa).

C15 provides a ligand contact to [4Fe-4S] cluster. Positions 44 and 77 each coordinate (2E)-4-hydroxy-3-methylbut-2-enyl diphosphate. 2 residues coordinate dimethylallyl diphosphate: H44 and H77. Isopentenyl diphosphate is bound by residues H44 and H77. C99 lines the [4Fe-4S] cluster pocket. H127 provides a ligand contact to (2E)-4-hydroxy-3-methylbut-2-enyl diphosphate. A dimethylallyl diphosphate-binding site is contributed by H127. H127 lines the isopentenyl diphosphate pocket. Residue E129 is the Proton donor of the active site. T167 is a (2E)-4-hydroxy-3-methylbut-2-enyl diphosphate binding site. C197 is a [4Fe-4S] cluster binding site. (2E)-4-hydroxy-3-methylbut-2-enyl diphosphate contacts are provided by S225, S226, N227, and S269. The dimethylallyl diphosphate site is built by S225, S226, N227, and S269. Isopentenyl diphosphate-binding residues include S225, S226, N227, and S269.

Belongs to the IspH family. [4Fe-4S] cluster is required as a cofactor.

It catalyses the reaction isopentenyl diphosphate + 2 oxidized [2Fe-2S]-[ferredoxin] + H2O = (2E)-4-hydroxy-3-methylbut-2-enyl diphosphate + 2 reduced [2Fe-2S]-[ferredoxin] + 2 H(+). It carries out the reaction dimethylallyl diphosphate + 2 oxidized [2Fe-2S]-[ferredoxin] + H2O = (2E)-4-hydroxy-3-methylbut-2-enyl diphosphate + 2 reduced [2Fe-2S]-[ferredoxin] + 2 H(+). It participates in isoprenoid biosynthesis; dimethylallyl diphosphate biosynthesis; dimethylallyl diphosphate from (2E)-4-hydroxy-3-methylbutenyl diphosphate: step 1/1. The protein operates within isoprenoid biosynthesis; isopentenyl diphosphate biosynthesis via DXP pathway; isopentenyl diphosphate from 1-deoxy-D-xylulose 5-phosphate: step 6/6. Catalyzes the conversion of 1-hydroxy-2-methyl-2-(E)-butenyl 4-diphosphate (HMBPP) into a mixture of isopentenyl diphosphate (IPP) and dimethylallyl diphosphate (DMAPP). Acts in the terminal step of the DOXP/MEP pathway for isoprenoid precursor biosynthesis. The sequence is that of 4-hydroxy-3-methylbut-2-enyl diphosphate reductase from Aromatoleum aromaticum (strain DSM 19018 / LMG 30748 / EbN1) (Azoarcus sp. (strain EbN1)).